A 113-amino-acid polypeptide reads, in one-letter code: Hydrogenase maturation factor HybF (113 aa).

Residues histidine 2 and glutamate 3 each coordinate Ni(2+). The Zn(2+) site is built by cysteine 73, cysteine 76, cysteine 89, and cysteine 92.

Belongs to the HypA/HybF family. HybF subfamily.

In terms of biological role, involved in the maturation of [NiFe] hydrogenases. Required for nickel insertion into the metal center of the hydrogenase. This Escherichia coli O157:H7 protein is Hydrogenase maturation factor HybF.